The following is a 555-amino-acid chain: Formate--tetrahydrofolate ligase (555 aa).

65 to 72 is an ATP binding site; the sequence is TPAGEGKS.

This sequence belongs to the formate--tetrahydrofolate ligase family.

It catalyses the reaction (6S)-5,6,7,8-tetrahydrofolate + formate + ATP = (6R)-10-formyltetrahydrofolate + ADP + phosphate. Its pathway is one-carbon metabolism; tetrahydrofolate interconversion. The chain is Formate--tetrahydrofolate ligase from Staphylococcus aureus (strain USA300).